Here is a 312-residue protein sequence, read N- to C-terminus: Olfactory receptor 51I2 (312 aa).

The Extracellular portion of the chain corresponds to 1 to 25 (MGLFNVTHPAFFLLTGIPGLESSHS). N5 carries N-linked (GlcNAc...) asparagine glycosylation. The chain crosses the membrane as a helical span at residues 26 to 46 (WLSGPLCVMYAVALGGNTVIL). Residues 47 to 54 (QAVRVEPS) are Cytoplasmic-facing. A helical transmembrane segment spans residues 55-75 (LHEPMYYFLSMLSFSDVAISM). The Extracellular portion of the chain corresponds to 76–99 (ATLPTVLRTFCLNARNITFDACLI). Cysteines 97 and 189 form a disulfide. A helical membrane pass occupies residues 100–120 (QMFLIHFFSMMESGILLAMSF). The Cytoplasmic portion of the chain corresponds to 121–139 (DRYVAICDPLRYATVLTTE). The chain crosses the membrane as a helical span at residues 140 to 160 (VIAAMGLGAAARSFITLFPLP). The Extracellular portion of the chain corresponds to 161-196 (FLIKRLPICRSNVLSHSYCLHPDMMRLACADISINS). A helical membrane pass occupies residues 197–217 (IYGLFVLVSTFGMDLFFIFLS). The Cytoplasmic segment spans residues 218–237 (YVLILRSVMATASREERLKA). A helical membrane pass occupies residues 238–258 (LNTCVSHILAVLAFYVPMIGV). Over 259–273 (STVHRFGKHVPCYIH) the chain is Extracellular. Residues 274 to 294 (VLMSNVYLFVPPVLNPLIYSA) traverse the membrane as a helical segment. Residues 295 to 312 (KTKEIRRAIFRMFHHIKI) lie on the Cytoplasmic side of the membrane.

The protein belongs to the G-protein coupled receptor 1 family.

The protein resides in the cell membrane. Its function is as follows. Odorant receptor. The chain is Olfactory receptor 51I2 (OR51I2) from Homo sapiens (Human).